A 390-amino-acid chain; its full sequence is Succinate--CoA ligase [ADP-forming] subunit beta (390 aa).

Residues Lys9–Met245 form the ATP-grasp domain. ATP contacts are provided by residues Lys46, Gly53–Gly55, Glu99, Ser102, and Glu107. Residues Asn200 and Asp214 each coordinate Mg(2+). Substrate contacts are provided by residues Asn265 and Gly322 to Val324.

Belongs to the succinate/malate CoA ligase beta subunit family. In terms of assembly, heterotetramer of two alpha and two beta subunits. Mg(2+) serves as cofactor.

It catalyses the reaction succinate + ATP + CoA = succinyl-CoA + ADP + phosphate. The enzyme catalyses GTP + succinate + CoA = succinyl-CoA + GDP + phosphate. It functions in the pathway carbohydrate metabolism; tricarboxylic acid cycle; succinate from succinyl-CoA (ligase route): step 1/1. In terms of biological role, succinyl-CoA synthetase functions in the citric acid cycle (TCA), coupling the hydrolysis of succinyl-CoA to the synthesis of either ATP or GTP and thus represents the only step of substrate-level phosphorylation in the TCA. The beta subunit provides nucleotide specificity of the enzyme and binds the substrate succinate, while the binding sites for coenzyme A and phosphate are found in the alpha subunit. The polypeptide is Succinate--CoA ligase [ADP-forming] subunit beta (Coxiella burnetii (strain RSA 331 / Henzerling II)).